We begin with the raw amino-acid sequence, 322 residues long: Apolipoprotein E (322 aa).

The first 18 residues, 1 to 18 (MKVLWAALLVAFLAGCQG), serve as a signal peptide directing secretion. 8 consecutive repeat copies span residues 84 to 105 (ALMD…EQLS), 106 to 127 (PVAE…ARLG), 128 to 149 (ADME…AMLG), 150 to 171 (QSXD…KRLL), 172 to 193 (RDVD…EGAE), 194 to 215 (RGVS…ARAA), 216 to 238 (TVGS…ERLR), and 239 to 260 (ARME…EQVE). Residues 84–260 (ALMDETMKEL…RLDEVKEQVE (177 aa)) are 8 X 22 AA approximate tandem repeats. At Met147 the chain carries Methionine sulfoxide. Ser151 is modified (phosphoserine). Positions 162-172 (HLRKLRKRLLR) are LDL and other lipoprotein receptors binding. 166–169 (LRKR) contacts heparin. Residues 214-295 (AATVGSSLAG…SWFEPLVEDM (82 aa)) form a lipid-binding and lipoprotein association region. A glycan (O-linked (GalNAc...) threonine) is linked at Thr216. A heparin-binding site is contributed by 234 to 241 (GERLRARM). Residues 271 to 322 (QQMRLQAEAFQARLKSWFEPLVEDMQRQWAGLVEKVQAAVGASAAPVPGDNH) are homooligomerization. Residues 283–295 (RLKSWFEPLVEDM) are specificity for association with VLDL.

It belongs to the apolipoprotein A1/A4/E family. As to quaternary structure, homotetramer. May interact with ABCA1; functionally associated with ABCA1 in the biogenesis of HDLs. May interact with APP/A4 amyloid-beta peptide; the interaction is extremely stable in vitro but its physiological significance is unclear. May interact with MAPT. May interact with MAP2. In the cerebrospinal fluid, interacts with secreted SORL1. Interacts with PMEL; this allows the loading of PMEL luminal fragment on ILVs to induce fibril nucleation. APOE exists as multiple glycosylated and sialylated glycoforms within cells and in plasma. The extent of glycosylation and sialylation are tissue and context specific. Post-translationally, glycated in plasma VLDL. In terms of processing, phosphorylated by FAM20C in the extracellular medium.

Its subcellular location is the secreted. It localises to the extracellular space. The protein localises to the extracellular matrix. The protein resides in the extracellular vesicle. It is found in the endosome. Its subcellular location is the multivesicular body. Functionally, APOE is an apolipoprotein, a protein associating with lipid particles, that mainly functions in lipoprotein-mediated lipid transport between organs via the plasma and interstitial fluids. APOE is a core component of plasma lipoproteins and is involved in their production, conversion and clearance. Apolipoproteins are amphipathic molecules that interact both with lipids of the lipoprotein particle core and the aqueous environment of the plasma. As such, APOE associates with chylomicrons, chylomicron remnants, very low density lipoproteins (VLDL) and intermediate density lipoproteins (IDL) but shows a preferential binding to high-density lipoproteins (HDL). It also binds a wide range of cellular receptors including the LDL receptor/LDLR, the LDL receptor-related proteins LRP1, LRP2 and LRP8 and the very low-density lipoprotein receptor/VLDLR that mediate the cellular uptake of the APOE-containing lipoprotein particles. Finally, APOE also has a heparin-binding activity and binds heparan-sulfate proteoglycans on the surface of cells, a property that supports the capture and the receptor-mediated uptake of APOE-containing lipoproteins by cells. A main function of APOE is to mediate lipoprotein clearance through the uptake of chylomicrons, VLDLs, and HDLs by hepatocytes. APOE is also involved in the biosynthesis by the liver of VLDLs as well as their uptake by peripheral tissues ensuring the delivery of triglycerides and energy storage in muscle, heart and adipose tissues. By participating in the lipoprotein-mediated distribution of lipids among tissues, APOE plays a critical role in plasma and tissues lipid homeostasis. APOE is also involved in two steps of reverse cholesterol transport, the HDLs-mediated transport of cholesterol from peripheral tissues to the liver, and thereby plays an important role in cholesterol homeostasis. First, it is functionally associated with ABCA1 in the biogenesis of HDLs in tissues. Second, it is enriched in circulating HDLs and mediates their uptake by hepatocytes. APOE also plays an important role in lipid transport in the central nervous system, regulating neuron survival and sprouting. The protein is Apolipoprotein E (APOE) of Ateles geoffroyi (Black-handed spider monkey).